A 465-amino-acid chain; its full sequence is DEAD-box ATP-dependent RNA helicase 55 (465 aa).

The Q motif motif lies at 17 to 45; the sequence is FSELKPPLSEDIIEALDRSGFEVCTPVQA. Positions 48-219 constitute a Helicase ATP-binding domain; it reads IPFLCSHKDV…KAGLRNPYLK (172 aa). Residue 61 to 68 participates in ATP binding; it reads AATGSGKT. Residues 167–170 carry the DEAD box motif; that stretch reads DEAD. In terms of domain architecture, Helicase C-terminal spans 228–422; the sequence is QLVHLLIENK…KDKLQQEKRG (195 aa). The tract at residues 413 to 465 is disordered; it reads KDKLQQEKRGKRKKSSKEAVDDSNKASRKRKLTGRQRQTIQTAQDEEEMNLRL. A compositionally biased stretch (basic and acidic residues) spans 428-437; that stretch reads SKEAVDDSNK. Positions 456–465 are enriched in acidic residues; sequence QDEEEMNLRL.

Belongs to the DEAD box helicase family. DDX55/SPB4 subfamily.

The catalysed reaction is ATP + H2O = ADP + phosphate + H(+). The protein is DEAD-box ATP-dependent RNA helicase 55 (RH55) of Arabidopsis thaliana (Mouse-ear cress).